A 212-amino-acid polypeptide reads, in one-letter code: Probable chemoreceptor glutamine deamidase CheD (212 aa).

Belongs to the CheD family.

The enzyme catalyses L-glutaminyl-[protein] + H2O = L-glutamyl-[protein] + NH4(+). Probably deamidates glutamine residues to glutamate on methyl-accepting chemotaxis receptors (MCPs), playing an important role in chemotaxis. This chain is Probable chemoreceptor glutamine deamidase CheD, found in Oleidesulfovibrio alaskensis (strain ATCC BAA-1058 / DSM 17464 / G20) (Desulfovibrio alaskensis).